The sequence spans 227 residues: Phage shock protein A homolog (227 aa).

Residues 33–125 (LRNMNSDLAK…AQMRKMHDKL (93 aa)) are a coiled coil. The disordered stretch occupies residues 191–211 (SAPQDDMADLSAKYDTGGSSQ).

The protein belongs to the PspA/Vipp/IM30 family.

This chain is Phage shock protein A homolog (ydjF), found in Bacillus subtilis (strain 168).